Reading from the N-terminus, the 160-residue chain is Leptin (160 aa).

The N-terminal stretch at Met1 to Cys17 is a signal peptide. Cys109 and Cys160 are disulfide-bonded.

Belongs to the leptin family.

It is found in the secreted. May function as part of a signaling pathway that acts to regulate the size of the body fat depot. In Tetraodon nigroviridis (Spotted green pufferfish), this protein is Leptin (lep).